The following is a 381-amino-acid chain: Dual-specificity RNA methyltransferase RlmN (381 aa).

The active-site Proton acceptor is the E96. Residues 102–342 (TDDRGTLCVS…TRTTRGDDID (241 aa)) form the Radical SAM core domain. Residues C109 and C345 are joined by a disulfide bond. [4Fe-4S] cluster is bound by residues C116, C120, and C123. S-adenosyl-L-methionine-binding positions include 170–171 (GE), S202, 224–226 (SLH), and N302. C345 (S-methylcysteine intermediate) is an active-site residue.

The protein belongs to the radical SAM superfamily. RlmN family. Requires [4Fe-4S] cluster as cofactor.

Its subcellular location is the cytoplasm. The catalysed reaction is adenosine(2503) in 23S rRNA + 2 reduced [2Fe-2S]-[ferredoxin] + 2 S-adenosyl-L-methionine = 2-methyladenosine(2503) in 23S rRNA + 5'-deoxyadenosine + L-methionine + 2 oxidized [2Fe-2S]-[ferredoxin] + S-adenosyl-L-homocysteine. The enzyme catalyses adenosine(37) in tRNA + 2 reduced [2Fe-2S]-[ferredoxin] + 2 S-adenosyl-L-methionine = 2-methyladenosine(37) in tRNA + 5'-deoxyadenosine + L-methionine + 2 oxidized [2Fe-2S]-[ferredoxin] + S-adenosyl-L-homocysteine. In terms of biological role, specifically methylates position 2 of adenine 2503 in 23S rRNA and position 2 of adenine 37 in tRNAs. m2A2503 modification seems to play a crucial role in the proofreading step occurring at the peptidyl transferase center and thus would serve to optimize ribosomal fidelity. This Pseudomonas putida (strain W619) protein is Dual-specificity RNA methyltransferase RlmN.